Here is a 1184-residue protein sequence, read N- to C-terminus: Protocadherin-12 (1184 aa).

The first 24 residues, 1–24, serve as a signal peptide directing secretion; it reads MMQLLQLLLGLLGPGGYLFLLGDC. The Extracellular portion of the chain corresponds to 25-718; it reads QEVTTLTVKY…PGALSMSMLT (694 aa). Cadherin domains follow at residues 28 to 135, 136 to 244, 245 to 352, 355 to 460, and 461 to 565; these read TTLT…QPRF, PKGE…SPAF, AESS…IPSI, TWAS…APVF, and EKSR…APEV. Residue N415 is glycosylated (N-linked (GlcNAc...) asparagine). 3 N-linked (GlcNAc...) asparagine glycosylation sites follow: N582, N659, and N662. The Cadherin 6 domain occupies 600–711; the sequence is PAGTDTPPLA…LRDSARKPGA (112 aa). A helical transmembrane segment spans residues 719–739; that stretch reads VICLAVLLGIFGLILALFMSI. At 740 to 1184 the chain is on the cytoplasmic side; it reads CRTEKKDNRA…RGSSSSSRCL (445 aa). Disordered stretches follow at residues 854 to 928 and 973 to 1023; these read RQRN…ESGP and QFQP…DPEE. S859 carries the phosphoserine modification. The segment covering 1012–1023 has biased composition (acidic residues); it reads PEQEEGPLDPEE. A Phosphoserine modification is found at S1062. A disordered region spans residues 1153–1184; the sequence is SAASGMKVQGDPGGKTGTEGKSRGSSSSSRCL. A compositionally biased stretch (low complexity) spans 1175-1184; the sequence is RGSSSSSRCL.

Post-translationally, cleaved by ADAM10 close to the transmembrane domain to release the Protocadherin-12, secreted form in the serum. Cleavage results in reduced cellular adhesion in a cell migration assay. Expressed in highly vascularized tissues including the heart and placenta, but most tissues contain a low level of expression. Prominent expression in the spleen. Present in villous and extravillous trophoblast (at protein level).

The protein localises to the cell membrane. It localises to the cell junction. The protein resides in the secreted. Its function is as follows. Cellular adhesion molecule that may play an important role in cell-cell interactions at interendothelial junctions. Acts as a regulator of cell migration, probably via increasing cell-cell adhesion. Promotes homotypic calcium-dependent aggregation and adhesion and clusters at intercellular junctions. Unable to bind to catenins, weakly associates with the cytoskeleton. The polypeptide is Protocadherin-12 (Homo sapiens (Human)).